Consider the following 157-residue polypeptide: Transcriptional repressor NrdR (157 aa).

The interval 1 to 22 (MRCPKCGATKSSVIDSRQAEEG) is disordered. The segment at 3–34 (CPKCGATKSSVIDSRQAEEGNTIRRRRECDEC) is a zinc-finger region. Residues 49-139 (LVVVKKDGTR…VYRSFKDVSE (91 aa)) enclose the ATP-cone domain.

The protein belongs to the NrdR family. Zn(2+) serves as cofactor.

Its function is as follows. Negatively regulates transcription of bacterial ribonucleotide reductase nrd genes and operons by binding to NrdR-boxes. This Streptococcus pneumoniae (strain Hungary19A-6) protein is Transcriptional repressor NrdR.